Consider the following 715-residue polypeptide: Coiled-coil domain-containing protein 13 (715 aa).

Coiled coils occupy residues 16-105 and 134-458; these read KAMQ…KERD and ATKI…NVHY. The disordered stretch occupies residues 20–65; sequence EMQHKRLQKQMEKKREKELSLKSRADDQEEPLEVSDGLSLLHAGEP. Positions 28-45 are enriched in basic and acidic residues; the sequence is KQMEKKREKELSLKSRAD. 3 positions are modified to phosphoserine: Ser-258, Ser-469, and Ser-536. Disordered regions lie at residues 482-541 and 607-645; these read EDPG…EQKG and LEPGKASASQRAAPRTKTGLPTSNNRHNPTGSEKKDPSF. Residues 554–608 adopt a coiled-coil conformation; sequence QAAEVERDRLTEFVTVLQKRVEESNSKLLESERKLQEERHRTVVLEQHLEKIRLE. Residues 625–637 show a composition bias toward polar residues; that stretch reads GLPTSNNRHNPTG. Residues 653 to 683 are a coiled coil; sequence VESQMEELTTRLAIQVEENEMLKAALGSALR.

In terms of assembly, interacts with PCM1, CEP290 and PCNT.

Its subcellular location is the cytoplasm. The protein resides in the cytoskeleton. It is found in the microtubule organizing center. It localises to the centrosome. The protein localises to the centriolar satellite. Its subcellular location is the cilium basal body. Required for primary cilia formation and promotes the localization of the ciliopathy protein BBS4 to both centriolar satellites and cilia. This is Coiled-coil domain-containing protein 13 from Homo sapiens (Human).